Reading from the N-terminus, the 40-residue chain is Beta/delta-ctenitoxin-Pr1a (40 aa).

4 disulfide bridges follow: Cys-1-Cys-15, Cys-8-Cys-21, Cys-14-Cys-31, and Cys-23-Cys-29.

Belongs to the neurotoxin 03 (Tx2) family. 05 subfamily. As to expression, expressed by the venom gland.

The protein localises to the secreted. Potent insecticidal toxin that binds to two distinct sites in insect sodium channels, with close affinity (Kd1=34.7 pM and Kd2=35.1 pM). Its association is rather fast (1.4 and 8.5 minutes, respectively for sites 1 and 2) and its dissociation is a slower process (5.4 and 32.8 minutes, respectively). On rat brain synaptosomes the toxin partially competes (~30%) with the beta-toxin CssIV, but does not compete with the alpha-toxin AaII, nor with the beta-toxin Ts VII. On cockroach nerve cord synaptosomes, the toxin does not compete with the anti-insect toxin LqqIT1, but it competes with the 'alpha-like' toxin BomIV (IC(50)=80 pM). In cockroach neurons, the toxin inhibits the inactivation of sodium channels and it shifts the sodium channel activation to hyperpolarizing potentials. Hence, it behaves like an 'alpha-like' toxin and binds preferentially to site 3 on the insect Nav channel, located on the domain IV. The toxin may also inhibit the N-methyl-D-aspartate (NMDA)-subtype of ionotropic glutamate receptor (GRIN). In vivo, the toxin causes excitatory effects on insects. The polypeptide is Beta/delta-ctenitoxin-Pr1a (Phoneutria reidyi (Brazilian Amazonian armed spider)).